The chain runs to 576 residues: Vesicular glutamate transporter 1 (576 aa).

The Cytoplasmic segment spans residues 1–63 (MEFRKEEFKK…CTCFGLPRRY (63 aa)). Residues 64–84 (IIAIMSGLGFCISFGIRCNLG) traverse the membrane as a helical segment. Residues 85–116 (VAIVSMVNNNTVYKGNKIVIEQAQFTWDPETV) are Vesicular-facing. Residue N93 is glycosylated (N-linked (GlcNAc...) asparagine). Residues 117-137 (GMIHGSFFWGYIVTQIPGGYI) form a helical membrane-spanning segment. At 138–140 (CQK) the chain is on the cytoplasmic side. A helical membrane pass occupies residues 141 to 161 (FAANRVFGFAIVATSTLNMLI). The Vesicular segment spans residues 162–168 (PSAARVH). The chain crosses the membrane as a helical span at residues 169–189 (FACVICVRILQGLVEGVTYPA). Over 190–208 (CHGIWSKWAPPLERSRLAT) the chain is Cytoplasmic. Residues 209-229 (TAFCGSYAGAVVAMPLAGVLV) form a helical membrane-spanning segment. Over 230–236 (QYSGWSS) the chain is Vesicular. The helical transmembrane segment at 237–257 (VFYVYGSFGIMWYMFWILVSY) threads the bilayer. At 258-302 (ESPAIHPTISEEEKKYIEESIGESTGLMNPMAKFKAPWRKFFTSM) the chain is on the cytoplasmic side. Residues 303 to 323 (PVYAIIVANFCRSWTFYLLLI) form a helical membrane-spanning segment. At 324–341 (SQPAYFEEVFGFEISKVG) the chain is on the vesicular side. The helical transmembrane segment at 342–362 (LLSALPHLVMTIIVPIGGQIA) threads the bilayer. Over 363 to 378 (DFLRTKRIMSTTNVRK) the chain is Cytoplasmic. Residues 379–399 (MMNCGGFGMEATLLLVVGYSH) traverse the membrane as a helical segment. At 400-401 (SR) the chain is on the vesicular side. The helical transmembrane segment at 402–422 (GVAISFLVLAVGFSGFAISGF) threads the bilayer. Residues 423 to 435 (NVNHLDIAPRYAS) lie on the Cytoplasmic side of the membrane. Residues 436–456 (ILMGISNGVGTLSGMVCPLIV) form a helical membrane-spanning segment. Topologically, residues 457-469 (GAMTKHKTREEWQ) are vesicular. A helical membrane pass occupies residues 470–490 (YVFLIASLVHYGGVLFYGIFA). At 491–576 (SGEKQPWAEP…YGTVAERDLS (86 aa)) the chain is on the cytoplasmic side. Residues 517–547 (ADESEEQSQAYGAYGSYGATQTTSQQNGGWT) form a disordered region. Residues 534–545 (GATQTTSQQNGG) show a composition bias toward polar residues.

It belongs to the major facilitator superfamily. Sodium/anion cotransporter family. VGLUT subfamily.

It localises to the cytoplasmic vesicle. It is found in the secretory vesicle. The protein resides in the synaptic vesicle membrane. The protein localises to the cell membrane. Its subcellular location is the synapse. It localises to the synaptosome. It catalyses the reaction L-glutamate(out) = L-glutamate(in). The enzyme catalyses chloride(in) = chloride(out). It carries out the reaction 3 Na(+)(out) + phosphate(out) = 3 Na(+)(in) + phosphate(in). The catalysed reaction is phosphate(in) = phosphate(out). It catalyses the reaction K(+)(in) + H(+)(out) = K(+)(out) + H(+)(in). Chloride channel activity is allosterically activated by lumenal H(+) and Cl(-) leading to synaptic vesicles acidification. The L-glutamate transport activity is allosterically activated by lumenal H(+) and Cl(-). The allosteric activation by H(+) efficiently prevents non-vesicular efflux across the plasma membrane, thereby restricting L-glutamate transport activity to acidic membranes such as synaptic vesicles. Multifunctional transporter that transports L-glutamate as well as multiple ions such as chloride, proton, potassium, sodium and phosphate. At the synaptic vesicle membrane, mainly functions as an uniporter which transports preferentially L-glutamate but also phosphate from the cytoplasm into synaptic vesicles at presynaptic nerve terminals of excitatory neural cells. The L-glutamate or phosphate uniporter activity is electrogenic and is driven by the proton electrochemical gradient, mainly by the electrical gradient established by the vacuolar H(+)-ATPase across the synaptic vesicle membrane. In addition, functions as a chloride channel that allows a chloride permeation through the synaptic vesicle membrane that affects the proton electrochemical gradient and promotes synaptic vesicles acidification. Moreover, may function as a K(+)/H(+) antiport allowing to maintain the electrical gradient and to decrease chemical gradient and therefore sustain vesicular glutamate uptake. The vesicular K(+)/H(+) antiport activity is electroneutral. At the plasma membrane, following exocytosis, functions as a symporter of Na(+) and phosphate from the extracellular space to the cytoplasm allowing synaptic phosphate homeostasis regulation. The symporter activity is driven by an inside negative membrane potential and is electrogenic. Is necessary for synaptic signaling of visual-evoked responses from photoreceptors. This Xenopus tropicalis (Western clawed frog) protein is Vesicular glutamate transporter 1.